A 138-amino-acid polypeptide reads, in one-letter code: Acidic phospholipase A2 Ts-A3 (138 aa).

Residues 1 to 16 (MRTLWIMAVLLLGVEG) form the signal peptide. Intrachain disulfides connect cysteine 42–cysteine 132, cysteine 44–cysteine 60, cysteine 59–cysteine 111, cysteine 65–cysteine 138, cysteine 66–cysteine 104, cysteine 73–cysteine 97, and cysteine 91–cysteine 102. The Ca(2+) site is built by tyrosine 43, glycine 45, and glycine 47. The active site involves histidine 63. Aspartate 64 lines the Ca(2+) pocket. Residue aspartate 105 is part of the active site.

Ca(2+) serves as cofactor. As to expression, expressed by the venom gland.

Its subcellular location is the secreted. It carries out the reaction a 1,2-diacyl-sn-glycero-3-phosphocholine + H2O = a 1-acyl-sn-glycero-3-phosphocholine + a fatty acid + H(+). Its function is as follows. Snake venom phospholipase A2 (PLA2) that shows a moderate inhibition of ADP-induced human platelet aggregation when tested on platelet rich plasma. Exhibits high hydrolytic activities and prefers the anionic micelles (dPPC with deoxycholate) to the zwitterionic micelles (dPPC with Triton X-100). PLA2 catalyzes the calcium-dependent hydrolysis of the 2-acyl groups in 3-sn-phosphoglycerides. The protein is Acidic phospholipase A2 Ts-A3 of Trimeresurus stejnegeri (Chinese green tree viper).